Consider the following 279-residue polypeptide: Acetyl-coenzyme A carboxylase carboxyl transferase subunit beta (279 aa).

Residues leucine 23–glycine 279 enclose the CoA carboxyltransferase N-terminal domain. Residues cysteine 27, cysteine 30, cysteine 46, and cysteine 49 each coordinate Zn(2+). The C4-type zinc finger occupies cysteine 27–cysteine 49.

It belongs to the AccD/PCCB family. As to quaternary structure, acetyl-CoA carboxylase is a heterohexamer composed of biotin carboxyl carrier protein (AccB), biotin carboxylase (AccC) and two subunits each of ACCase subunit alpha (AccA) and ACCase subunit beta (AccD). Requires Zn(2+) as cofactor.

The protein localises to the cytoplasm. The enzyme catalyses N(6)-carboxybiotinyl-L-lysyl-[protein] + acetyl-CoA = N(6)-biotinyl-L-lysyl-[protein] + malonyl-CoA. It participates in lipid metabolism; malonyl-CoA biosynthesis; malonyl-CoA from acetyl-CoA: step 1/1. Its function is as follows. Component of the acetyl coenzyme A carboxylase (ACC) complex. Biotin carboxylase (BC) catalyzes the carboxylation of biotin on its carrier protein (BCCP) and then the CO(2) group is transferred by the transcarboxylase to acetyl-CoA to form malonyl-CoA. The polypeptide is Acetyl-coenzyme A carboxylase carboxyl transferase subunit beta (Chlorobaculum parvum (strain DSM 263 / NCIMB 8327) (Chlorobium vibrioforme subsp. thiosulfatophilum)).